A 399-amino-acid polypeptide reads, in one-letter code: MAKEKFNRTKPHVNIGTIGHVDHGKTTLSAAISAVLSLKGLAEMKDYDNIDNAPEEKERGITIATSHIEYETENRHYAHVDCPGHADYVKNMITGAAQMDGAILVVSAADGPMPQTREHILLSRQVGVPHIVVFLNKQDMVDDQELLELVEMEVRELLSAYEFPGDDTPIIAGSALRALKKAKAGNVGEWGEKVLKLMAEVDAYIPTPKRDTEKTFLMPVEDVFSIAGRGTVVTGRIERGVVKVGDEVEIVGIRATQKTTVTGVEMFRKELEKGEAGDNVGVLLRGTKKEEVERGMVLCKPGSITPHKKFEGEIYVLSKEEGGRHTPFFTNYRPQFYVRTTDVTGSITLPEGVEMVMPGDNVKITVELISPVALELGTKFAIREGGRTVGAGVVSNIIE.

Positions Lys-10–Lys-209 constitute a tr-type G domain. The segment at Gly-19–Thr-26 is G1. Gly-19–Thr-26 lines the GTP pocket. Thr-26 contacts Mg(2+). The tract at residues Gly-60–Ala-64 is G2. Residues Asp-81 to Gly-84 are G3. GTP-binding positions include Asp-81–His-85 and Asn-136–Asp-139. A G4 region spans residues Asn-136–Asp-139. Residues Ser-174 to Leu-176 form a G5 region.

This sequence belongs to the TRAFAC class translation factor GTPase superfamily. Classic translation factor GTPase family. EF-Tu/EF-1A subfamily. Monomer.

The protein resides in the cytoplasm. It catalyses the reaction GTP + H2O = GDP + phosphate + H(+). In terms of biological role, GTP hydrolase that promotes the GTP-dependent binding of aminoacyl-tRNA to the A-site of ribosomes during protein biosynthesis. The sequence is that of Elongation factor Tu from Helicobacter pylori (strain P12).